The sequence spans 236 residues: Purine nucleoside phosphorylase DeoD-type 2 (236 aa).

Position 5 (His-5) interacts with a purine D-ribonucleoside. Residues Gly-21, Arg-25, Arg-44, and 88 to 91 contribute to the phosphate site; that span reads RVGT. A purine D-ribonucleoside-binding positions include 180 to 182 and 204 to 205; these read EME and SD. Asp-205 acts as the Proton donor in catalysis.

The protein belongs to the PNP/UDP phosphorylase family. In terms of assembly, homohexamer; trimer of homodimers.

It carries out the reaction a purine D-ribonucleoside + phosphate = a purine nucleobase + alpha-D-ribose 1-phosphate. The enzyme catalyses a purine 2'-deoxy-D-ribonucleoside + phosphate = a purine nucleobase + 2-deoxy-alpha-D-ribose 1-phosphate. Its function is as follows. Catalyzes the reversible phosphorolytic breakdown of the N-glycosidic bond in the beta-(deoxy)ribonucleoside molecules, with the formation of the corresponding free purine bases and pentose-1-phosphate. The protein is Purine nucleoside phosphorylase DeoD-type 2 of Shewanella oneidensis (strain ATCC 700550 / JCM 31522 / CIP 106686 / LMG 19005 / NCIMB 14063 / MR-1).